A 416-amino-acid polypeptide reads, in one-letter code: Nucleoside transporter 1 (416 aa).

Residues 1-26 are compositionally biased toward basic and acidic residues; it reads MSISKESSKTMIDIEKKGGEGKDGKG. The segment at 1 to 28 is disordered; the sequence is MSISKESSKTMIDIEKKGGEGKDGKGGS. Over 1 to 35 the chain is Cytoplasmic; it reads MSISKESSKTMIDIEKKGGEGKDGKGGSKMTKNEQ. A helical transmembrane segment spans residues 36 to 58; the sequence is FLLPFTFILIGLSSLNVWNTALG. The Extracellular segment spans residues 59-64; that stretch reads LNINFK. The helical transmembrane segment at 65-83 threads the bilayer; sequence YNTFQITGLVCSSIIALFV. Over 84 to 87 the chain is Cytoplasmic; sequence KVPK. The helical transmembrane segment at 88 to 107 threads the bilayer; that stretch reads MLLPFALGGLAMLCAGFQIA. Over 108-119 the chain is Extracellular; that stretch reads HQCFTFEQFDTY. Residues 120–139 traverse the membrane as a helical segment; sequence CLIAFIVIGIMAGLAQTIAF. Residues 140–148 lie on the Cytoplasmic side of the membrane; that stretch reads SVGTTMEEN. Residues 149-171 form a helical membrane-spanning segment; that stretch reads MGGYMSAGIGISGVFIFIINLLL. Over 172-187 the chain is Extracellular; sequence DQIVPDQKKFNVNEAK. The helical transmembrane segment at 188-210 threads the bilayer; it reads LLYLFLICELCLVLAIIFSVCNL. The Cytoplasmic portion of the chain corresponds to 211–241; it reads ELSSSKTSKEEEYSDKEQGLSYLELLKDSYK. The helical transmembrane segment at 242-261 threads the bilayer; the sequence is AILAMFLVNWLSLQLFPGVG. At 262–273 the chain is on the extracellular side; the sequence is HKKWQESHNISD. A helical membrane pass occupies residues 274–292; the sequence is YNVTLIVGMFQVFDFVSRY. Residues 293–311 lie on the Cytoplasmic side of the membrane; it reads PPNLSHMKIFKWFTFSLNK. A helical transmembrane segment spans residues 312-331; it reads LLLLNFLRLLFIPWFVINAA. Residues 332–343 lie on the Extracellular side of the membrane; the sequence is CDLPIFTNIVQQ. Residues 344-366 traverse the membrane as a helical segment; it reads CVCMAMLAFTNGWFNTVPFLVFV. Residues 367-380 lie on the Cytoplasmic side of the membrane; it reads QELKKAKKKKDIET. A helical membrane pass occupies residues 381–403; it reads ISTFLVVAMFVGLFMGIWTTYIY. Over 404–416 the chain is Extracellular; that stretch reads DFFPIVIKRYVVP.

It belongs to the SLC29A/ENT transporter (TC 2.A.57) family.

It localises to the cell membrane. The catalysed reaction is inosine(in) = inosine(out). It catalyses the reaction adenosine(in) = adenosine(out). It carries out the reaction hypoxanthine(out) = hypoxanthine(in). The enzyme catalyses guanosine(in) = guanosine(out). The catalysed reaction is guanine(out) = guanine(in). It catalyses the reaction thymidine(in) = thymidine(out). It carries out the reaction uridine(out) = uridine(in). The enzyme catalyses uracil(in) = uracil(out). The catalysed reaction is thymine(out) = thymine(in). It catalyses the reaction adenine(out) = adenine(in). It carries out the reaction cytosine(out) = cytosine(in). The enzyme catalyses xanthine(out) = xanthine(in). Nucleoside and nucleobase transporter with a broad substrate specificity. The chain is Nucleoside transporter 1 from Plasmodium vivax (strain Salvador I).